The chain runs to 471 residues: A-type ATP synthase subunit B (471 aa).

It belongs to the ATPase alpha/beta chains family. In terms of assembly, has multiple subunits with at least A(3), B(3), C, D, E, F, H, I and proteolipid K(x).

It localises to the cell membrane. In terms of biological role, component of the A-type ATP synthase that produces ATP from ADP in the presence of a proton gradient across the membrane. The B chain is a regulatory subunit. This is A-type ATP synthase subunit B from Ignicoccus hospitalis (strain KIN4/I / DSM 18386 / JCM 14125).